A 270-amino-acid polypeptide reads, in one-letter code: Esterase (270 aa).

Residues Ser127, Asp216, and His244 each act as charge relay system in the active site.

This sequence belongs to the LovG family.

It functions in the pathway mycotoxin biosynthesis. In terms of biological role, esterase; part of the gene cluster that mediates the biosynthesis of the selective antifungal agent ascochitine, an o-quinone methide that plays a possible protective role against other microbial competitors in nature and is considered to be important for pathogenicity of legume-associated Didymella species. The pathway probably begins with the synthesis of a keto-aldehyde intermediate by the ascochitine non-reducing polyketide synthase pksAC from successive condensations of 4 malonyl-CoA units, presumably with a simple acetyl-CoA starter unit. Release of the keto-aldehyde intermediate is consistent with the presence of the C-terminal reductive release domain. The HR-PKS (orf7) probably makes a diketide starter unit which is passed to the non-reducing polyketide synthase pksAC for further extension, producing ascochital and ascochitine. The aldehyde dehydrogenase (orf1), the 2-oxoglutarate-dependent dioxygenase (orf3) and the dehydrogenase (orf9) are probably involved in subsequent oxidations of methyl groups to the carboxylic acid of the heterocyclic ring. The ascochitine gene cluster also includes a gene encoding a short peptide with a cupin domain (orf2) that is often found in secondary metabolite gene clusters and which function has still to be determined. In Didymella fabae (Leaf and pod spot disease fungus), this protein is Esterase.